Here is a 135-residue protein sequence, read N- to C-terminus: Sex-regulated protein janus-A (135 aa).

Lys-37 is a substrate binding site. The Proton acceptor role is filled by His-63. Position 104–106 (104–106) interacts with substrate; sequence SQG.

This sequence belongs to the janus family.

In terms of biological role, janA and janB regulate somatic sex differentiation. The chain is Sex-regulated protein janus-A (janA) from Drosophila erecta (Fruit fly).